The sequence spans 272 residues: Transcription factor E2F6 (272 aa).

The binding to corepressors stretch occupies residues 1–62 (MSQQRTARRQ…MRKALKVKRP (62 aa)). Residues 50–129 (YVSMRKALKV…SKNHIRWIGS (80 aa)) mediate DNA binding. Residues 95 to 129 (KLGVRKRRVYDITNVLDGIELVEKKSKNHIRWIGS) carry the DEF box motif. Residues 130 to 222 (DLNNFGAAPQ…PAPREDSITV (93 aa)) form a dimerization region. The segment at 143 to 164 (LQAELSDLSAMEDALDELIKDC) is leucine-zipper. Residues 173-272 (DDKENERLAY…CPEKEDEPPQ (100 aa)) are transcription repression. Positions 242 to 272 (HSNGKTNDGIGASPSKSSHPQCPEKEDEPPQ) are disordered.

Belongs to the E2F/DP family. Forms heterodimers with DP family members TFDP1 or TFDP2. Component of the DRTF1/E2F transcription factor complex. Part of the E2F6.com-1 complex in G0 phase composed of E2F6, MGA, MAX, TFDP1, CBX3, BAT8, EUHMTASE1, RING1, RNF2, MBLR, L3MBTL2 and YAF2. Component of some MLL1/MLL complex, at least composed of the core components KMT2A/MLL1, ASH2L, HCFC1/HCF1, WDR5 and RBBP5, as well as the facultative components BACC1, CHD8, E2F6, HSP70, INO80C, KANSL1, LAS1L, MAX, MCRS1, MGA, KAT8/MOF, PELP1, PHF20, PRP31, RING2, RUVB1/TIP49A, RUVB2/TIP49B, SENP3, TAF1, TAF4, TAF6, TAF7, TAF9 and TEX10.

It localises to the nucleus. Its function is as follows. Inhibitor of E2F-dependent transcription. Binds DNA cooperatively with DP proteins through the E2 recognition site, 5'-TTTC[CG]CGC-3'. Has a preference for the 5'-TTTCCCGC-3' E2F recognition site. E2F6 lacks the transcriptional activation and pocket protein binding domains. Appears to regulate a subset of E2F-dependent genes whose products are required for entry into the cell cycle but not for normal cell cycle progression. Represses expression of some meiosis-specific genes, including SLC25A31/ANT4. May silence expression via the recruitment of a chromatin remodeling complex containing histone H3-K9 methyltransferase activity. Overexpression delays the exit of cells from the S-phase. In Mus musculus (Mouse), this protein is Transcription factor E2F6.